Consider the following 982-residue polypeptide: Glycine dehydrogenase (decarboxylating) (982 aa).

An N6-(pyridoxal phosphate)lysine modification is found at Lys-729.

Belongs to the GcvP family. The glycine cleavage system is composed of four proteins: P, T, L and H. Pyridoxal 5'-phosphate serves as cofactor.

It catalyses the reaction N(6)-[(R)-lipoyl]-L-lysyl-[glycine-cleavage complex H protein] + glycine + H(+) = N(6)-[(R)-S(8)-aminomethyldihydrolipoyl]-L-lysyl-[glycine-cleavage complex H protein] + CO2. Its function is as follows. The glycine cleavage system catalyzes the degradation of glycine. The P protein binds the alpha-amino group of glycine through its pyridoxal phosphate cofactor; CO(2) is released and the remaining methylamine moiety is then transferred to the lipoamide cofactor of the H protein. In Ralstonia nicotianae (strain ATCC BAA-1114 / GMI1000) (Ralstonia solanacearum), this protein is Glycine dehydrogenase (decarboxylating).